Reading from the N-terminus, the 808-residue chain is DNA replication licensing factor MCM3 (808 aa).

At alanine 2 the chain carries N-acetylalanine. Serine 160 and serine 275 each carry phosphoserine. Lysine 293 bears the N6-acetyllysine mark. Positions 295–502 (IFDQLAKSLA…QDREISDHVL (208 aa)) constitute an MCM domain. ADP is bound by residues glutamine 353, leucine 393, glutamate 394, alanine 395, and alanine 397. The Arginine finger signature appears at 477 to 480 (SRFD). Alanine 523 provides a ligand contact to ATP. Phosphoserine; by ATM is present on serine 535. N6-acetyllysine is present on lysine 547. Serine 611 carries the post-translational modification Phosphoserine. The interval 662-739 (KKRKKRSEDE…ETKESQKVEL (78 aa)) is disordered. Arginine 664 provides a ligand contact to ATP. Serine 668 and serine 672 each carry phosphoserine. Composition is skewed to acidic residues over residues 670-681 (DESETEDEEEKS) and 704-717 (SYDP…EEEM). A Phosphothreonine modification is found at threonine 674. Serine 681 carries the post-translational modification Phosphoserine. At tyrosine 708 the chain carries Phosphotyrosine. The residue at position 711 (serine 711) is a Phosphoserine. Phosphothreonine is present on residues threonine 713, threonine 722, and threonine 725. The span at 727-739 (DSQETKESQKVEL) shows a compositional bias: basic and acidic residues. A phosphoserine mark is found at serine 728 and serine 734.

This sequence belongs to the MCM family. Component of the MCM2-7 complex. The complex forms a toroidal hexameric ring with the proposed subunit order MCM2-MCM6-MCM4-MCM7-MCM3-MCM5. Component of the CMG helicase complex, a hexameric ring of related MCM2-7 subunits stabilized by CDC45 and the tetrameric GINS complex. Associated with the replication-specific DNA polymerase alpha. Interacts with MCMBP. Interacts with ANKRD17. Interacts with MCM3AP isoform MCM3AP; this interaction leads to MCM3 acetylation. In terms of processing, acetylated by MCM3AP. O-glycosylated (O-GlcNAcylated), in a cell cycle-dependent manner.

The protein localises to the nucleus. The protein resides in the chromosome. The enzyme catalyses ATP + H2O = ADP + phosphate + H(+). Its function is as follows. Acts as a component of the MCM2-7 complex (MCM complex) which is the replicative helicase essential for 'once per cell cycle' DNA replication initiation and elongation in eukaryotic cells. Core component of CDC45-MCM-GINS (CMG) helicase, the molecular machine that unwinds template DNA during replication, and around which the replisome is built. The active ATPase sites in the MCM2-7 ring are formed through the interaction surfaces of two neighboring subunits such that a critical structure of a conserved arginine finger motif is provided in trans relative to the ATP-binding site of the Walker A box of the adjacent subunit. The six ATPase active sites, however, are likely to contribute differentially to the complex helicase activity. Required for the entry in S phase and for cell division. The sequence is that of DNA replication licensing factor MCM3 from Homo sapiens (Human).